We begin with the raw amino-acid sequence, 366 residues long: Ribosomal RNA large subunit methyltransferase M (366 aa).

Residues S188, 221–224, D240, D260, and D277 each bind S-adenosyl-L-methionine; that span reads CPGG. K306 (proton acceptor) is an active-site residue.

The protein belongs to the class I-like SAM-binding methyltransferase superfamily. RNA methyltransferase RlmE family. RlmM subfamily. In terms of assembly, monomer.

The protein resides in the cytoplasm. It carries out the reaction cytidine(2498) in 23S rRNA + S-adenosyl-L-methionine = 2'-O-methylcytidine(2498) in 23S rRNA + S-adenosyl-L-homocysteine + H(+). Catalyzes the 2'-O-methylation at nucleotide C2498 in 23S rRNA. The protein is Ribosomal RNA large subunit methyltransferase M of Pectobacterium atrosepticum (strain SCRI 1043 / ATCC BAA-672) (Erwinia carotovora subsp. atroseptica).